Reading from the N-terminus, the 282-residue chain is ATP synthase gamma chain (282 aa).

Belongs to the ATPase gamma chain family. As to quaternary structure, F-type ATPases have 2 components, CF(1) - the catalytic core - and CF(0) - the membrane proton channel. CF(1) has five subunits: alpha(3), beta(3), gamma(1), delta(1), epsilon(1). CF(0) has three main subunits: a, b and c.

The protein localises to the cell membrane. In terms of biological role, produces ATP from ADP in the presence of a proton gradient across the membrane. The gamma chain is believed to be important in regulating ATPase activity and the flow of protons through the CF(0) complex. In Clostridium botulinum (strain Langeland / NCTC 10281 / Type F), this protein is ATP synthase gamma chain.